We begin with the raw amino-acid sequence, 258 residues long: Trans-aconitate 2-methyltransferase (258 aa).

It belongs to the methyltransferase superfamily. Tam family.

The protein localises to the cytoplasm. It catalyses the reaction trans-aconitate + S-adenosyl-L-methionine = (E)-3-(methoxycarbonyl)pent-2-enedioate + S-adenosyl-L-homocysteine. Catalyzes the S-adenosylmethionine monomethyl esterification of trans-aconitate. This is Trans-aconitate 2-methyltransferase from Acidovorax ebreus (strain TPSY) (Diaphorobacter sp. (strain TPSY)).